A 295-amino-acid polypeptide reads, in one-letter code: Phosphatidylserine decarboxylase proenzyme (295 aa).

Catalysis depends on charge relay system; for autoendoproteolytic cleavage activity residues aspartate 90, histidine 147, and serine 254. Serine 254 serves as the catalytic Schiff-base intermediate with substrate; via pyruvic acid; for decarboxylase activity. Serine 254 is modified (pyruvic acid (Ser); by autocatalysis).

Belongs to the phosphatidylserine decarboxylase family. PSD-B subfamily. Prokaryotic type I sub-subfamily. Heterodimer of a large membrane-associated beta subunit and a small pyruvoyl-containing alpha subunit. Requires pyruvate as cofactor. In terms of processing, is synthesized initially as an inactive proenzyme. Formation of the active enzyme involves a self-maturation process in which the active site pyruvoyl group is generated from an internal serine residue via an autocatalytic post-translational modification. Two non-identical subunits are generated from the proenzyme in this reaction, and the pyruvate is formed at the N-terminus of the alpha chain, which is derived from the carboxyl end of the proenzyme. The autoendoproteolytic cleavage occurs by a canonical serine protease mechanism, in which the side chain hydroxyl group of the serine supplies its oxygen atom to form the C-terminus of the beta chain, while the remainder of the serine residue undergoes an oxidative deamination to produce ammonia and the pyruvoyl prosthetic group on the alpha chain. During this reaction, the Ser that is part of the protease active site of the proenzyme becomes the pyruvoyl prosthetic group, which constitutes an essential element of the active site of the mature decarboxylase.

The protein resides in the cell membrane. The enzyme catalyses a 1,2-diacyl-sn-glycero-3-phospho-L-serine + H(+) = a 1,2-diacyl-sn-glycero-3-phosphoethanolamine + CO2. Its pathway is phospholipid metabolism; phosphatidylethanolamine biosynthesis; phosphatidylethanolamine from CDP-diacylglycerol: step 2/2. Its function is as follows. Catalyzes the formation of phosphatidylethanolamine (PtdEtn) from phosphatidylserine (PtdSer). In Sodalis glossinidius (strain morsitans), this protein is Phosphatidylserine decarboxylase proenzyme.